We begin with the raw amino-acid sequence, 1070 residues long: TSC22 domain family protein 1 (1070 aa).

The segment at 1 to 98 (MHQPPESTAA…SQAQLQAQPL (98 aa)) is required for interaction with TGFBR1 and promotion of TGF-beta signaling. Disordered stretches follow at residues 1-110 (MHQP…KKSG), 125-289 (ISSN…PASV), 458-487 (VTSE…VGSG), 604-637 (YSQA…STQM), and 830-858 (TSQV…AQTP). The span at 36–45 (GSASALNAAG) shows a compositional bias: low complexity. Residues 58 to 70 (FPPPSLLQPPPPA) show a composition bias toward pro residues. A compositionally biased stretch (low complexity) spans 84 to 100 (SLNLLSQAQLQAQPLAP). Acidic residues predominate over residues 133–142 (EDTESYDDLD). Over residues 216–240 (HPHHLHHHHHIHHGHHLQHGHHHPS) the composition is skewed to basic residues. Low complexity predominate over residues 241–250 (HVAVASASIP). The segment covering 261–271 (KLSTTGSSDSI) has biased composition (polar residues). Phosphoserine is present on S263. 2 stretches are compositionally biased toward low complexity: residues 272–289 (TPVA…PASV) and 465–478 (TSGS…STRS). A compositionally biased stretch (pro residues) spans 611-622 (VQTPLPGAPPPQ). The segment covering 830–845 (TSQVSSAGPSGMPSAP) has biased composition (low complexity). The segment covering 849–858 (VPPQNIAQTP) has biased composition (polar residues). The tract at residues 1003–1024 (LKEQIKELIEKNSQLEQENNLL) is leucine-zipper. The disordered stretch occupies residues 1034 to 1070 (AQFQAQLQTGSPPATTQPQGTTQPPAQPASQGSGPTA). Residues 1041–1070 (QTGSPPATTQPQGTTQPPAQPASQGSGPTA) are compositionally biased toward low complexity.

It belongs to the TSC-22/Dip/Bun family. Forms homodimers. Forms heterodimers. Component of a complex composed of TSC22D1 (via N-terminus), TGFBR1 and TGFBR2; the interaction between TSC22D1 and TGFBR1 is inhibited by SMAD7 and promoted by TGFB1. Interacts with SMAD7; the interaction requires TGF-beta and the interaction is inhibited by TGFBR1. Interacts with TPT1/fortilin; interaction results in the destabilization of TSC22D1 protein and prevents TSC22D1-mediated apoptosis. Interacts with SMAD4 (via N-terminus). Interacts with ACVRL1/ALK1, ACVR1/ALK2, BMPR1A/ALK3, ACVR1B/ALK4, BMPR1B/ALK6, ACVR2A/ACTRII, and BMPR2. Interacts with SMAD6. Interacts with TFE3; the interaction is enhanced in the presence of TGF-beta. As to quaternary structure, forms a heterodimer with TSC22D4/THG1. In terms of assembly, forms a heterodimer with TSC22D4/THG1. Interacts with histone H1-2. Interacts with GNL3.

The protein localises to the cytoplasm. The protein resides in the nucleus. It is found in the cell membrane. Its subcellular location is the mitochondrion. Transcriptional repressor. Acts on the C-type natriuretic peptide (CNP) promoter. Acts to promote CASP3-mediated apoptosis. Positively regulates TGF-beta signaling by interacting with SMAD7 which inhibits binding of SMAD7 to TGFBR1, preventing recruitment of SMURF ubiquitin ligases to TGFBR1 and inhibiting SMURF-mediated ubiquitination and degradation of TGFBR1. Contributes to enhancement of TGF-beta signaling by binding to and modulating the transcription activator activity of SMAD4. Promotes TGF-beta-induced transcription of COL1A2; via its interaction with TFE3 at E-boxes in the gene proximal promoter. Plays a role in the repression of hematopoietic precursor cell growth. Promotes IL2 deprivation-induced apoptosis in T-lymphocytes, via repression of TSC22D3/GILZ transcription and activation of the caspase cascade. In terms of biological role, may act to negatively regulate TGFB3 signaling and thereby inhibit cell death in mammary gland cells. Its function is as follows. Positively regulates cell death in response to TGFB3 during mammary gland involution. The polypeptide is TSC22 domain family protein 1 (Pongo abelii (Sumatran orangutan)).